The following is a 95-amino-acid chain: MTKSELIEKLATRQSQLSAKEVEGAIKEMLEQMATTLESGDRIEIRGFGSFSLHYRAPRTGRNPKTGSSVELEGKYVPHFKPGKELRERVDAVNV.

Belongs to the bacterial histone-like protein family. As to quaternary structure, heterodimer of an alpha and a beta chain.

In terms of biological role, this protein is one of the two subunits of integration host factor, a specific DNA-binding protein that functions in genetic recombination as well as in transcriptional and translational control. The chain is Integration host factor subunit beta from Shewanella sp. (strain ANA-3).